A 354-amino-acid polypeptide reads, in one-letter code: UDP-3-O-acylglucosamine N-acyltransferase (354 aa).

H250 serves as the catalytic Proton acceptor.

The protein belongs to the transferase hexapeptide repeat family. LpxD subfamily. In terms of assembly, homotrimer.

The enzyme catalyses a UDP-3-O-[(3R)-3-hydroxyacyl]-alpha-D-glucosamine + a (3R)-hydroxyacyl-[ACP] = a UDP-2-N,3-O-bis[(3R)-3-hydroxyacyl]-alpha-D-glucosamine + holo-[ACP] + H(+). Its pathway is bacterial outer membrane biogenesis; LPS lipid A biosynthesis. Functionally, catalyzes the N-acylation of UDP-3-O-acylglucosamine using 3-hydroxyacyl-ACP as the acyl donor. Is involved in the biosynthesis of lipid A, a phosphorylated glycolipid that anchors the lipopolysaccharide to the outer membrane of the cell. This is UDP-3-O-acylglucosamine N-acyltransferase from Methylococcus capsulatus (strain ATCC 33009 / NCIMB 11132 / Bath).